A 696-amino-acid polypeptide reads, in one-letter code: Elongation factor G (696 aa).

Positions 8–282 constitute a tr-type G domain; sequence DRTRNIGIMA…AVIDYLPSPL (275 aa). Residues 17-24, 81-85, and 135-138 contribute to the GTP site; these read AHIDAGKT, DTPGH, and NKMD.

Belongs to the TRAFAC class translation factor GTPase superfamily. Classic translation factor GTPase family. EF-G/EF-2 subfamily.

The protein localises to the cytoplasm. Catalyzes the GTP-dependent ribosomal translocation step during translation elongation. During this step, the ribosome changes from the pre-translocational (PRE) to the post-translocational (POST) state as the newly formed A-site-bound peptidyl-tRNA and P-site-bound deacylated tRNA move to the P and E sites, respectively. Catalyzes the coordinated movement of the two tRNA molecules, the mRNA and conformational changes in the ribosome. This chain is Elongation factor G, found in Staphylococcus saprophyticus subsp. saprophyticus (strain ATCC 15305 / DSM 20229 / NCIMB 8711 / NCTC 7292 / S-41).